The following is a 396-amino-acid chain: Elongation factor Tu (396 aa).

The tr-type G domain maps to 10–205 (KPHVNIGTIG…ACDDNIPDPV (196 aa)). The segment at 19–26 (GHVDHGKT) is G1. Position 19–26 (19–26 (GHVDHGKT)) interacts with GTP. Position 26 (Thr-26) interacts with Mg(2+). Positions 62-66 (GITIN) are G2. The tract at residues 83-86 (DAPG) is G3. GTP contacts are provided by residues 83-87 (DAPGH) and 138-141 (NKCD). Positions 138–141 (NKCD) are G4. The interval 175 to 177 (SAL) is G5.

The protein belongs to the TRAFAC class translation factor GTPase superfamily. Classic translation factor GTPase family. EF-Tu/EF-1A subfamily. In terms of assembly, monomer.

It is found in the cytoplasm. It carries out the reaction GTP + H2O = GDP + phosphate + H(+). Functionally, GTP hydrolase that promotes the GTP-dependent binding of aminoacyl-tRNA to the A-site of ribosomes during protein biosynthesis. The sequence is that of Elongation factor Tu from Corynebacterium efficiens (strain DSM 44549 / YS-314 / AJ 12310 / JCM 11189 / NBRC 100395).